Consider the following 710-residue polypeptide: Polyribonucleotide nucleotidyltransferase (710 aa).

Residues aspartate 488 and aspartate 494 each coordinate Mg(2+). The KH domain occupies 555–615 (PVIKVISIDP…EKVDAAIEQI (61 aa)). The S1 motif domain maps to 625-688 (GDVFSGKVTR…NLGRLQLEEF (64 aa)). The tract at residues 688-710 (FSDSPDHKHGEKRSFKRHRKNDN) is disordered. A compositionally biased stretch (basic and acidic residues) spans 691-700 (SPDHKHGEKR). The segment covering 701-710 (SFKRHRKNDN) has biased composition (basic residues).

The protein belongs to the polyribonucleotide nucleotidyltransferase family. The cofactor is Mg(2+).

It is found in the cytoplasm. The enzyme catalyses RNA(n+1) + phosphate = RNA(n) + a ribonucleoside 5'-diphosphate. Functionally, involved in mRNA degradation. Catalyzes the phosphorolysis of single-stranded polyribonucleotides processively in the 3'- to 5'-direction. The chain is Polyribonucleotide nucleotidyltransferase from Pseudothermotoga lettingae (strain ATCC BAA-301 / DSM 14385 / NBRC 107922 / TMO) (Thermotoga lettingae).